We begin with the raw amino-acid sequence, 311 residues long: Ornithine carbamoyltransferase (311 aa).

Residues 56–59 (STRT), glutamine 83, arginine 107, and 134–137 (HPTQ) contribute to the carbamoyl phosphate site. L-ornithine-binding positions include asparagine 166, aspartate 230, and 234-235 (SM). Residues 270–271 (CL) and lysine 298 each bind carbamoyl phosphate.

The protein belongs to the aspartate/ornithine carbamoyltransferase superfamily. OTCase family.

Its subcellular location is the cytoplasm. It carries out the reaction carbamoyl phosphate + L-ornithine = L-citrulline + phosphate + H(+). It participates in amino-acid degradation; L-arginine degradation via ADI pathway; carbamoyl phosphate from L-arginine: step 2/2. Its function is as follows. Reversibly catalyzes the transfer of the carbamoyl group from carbamoyl phosphate (CP) to the N(epsilon) atom of ornithine (ORN) to produce L-citrulline. This chain is Ornithine carbamoyltransferase, found in Ignicoccus hospitalis (strain KIN4/I / DSM 18386 / JCM 14125).